The primary structure comprises 528 residues: Na(+)/H(+) antiporter NhaB (528 aa).

The next 11 membrane-spanning stretches (helical) occupy residues 10-30 (IGNFLGNSPKWYKIAILSFLI), 63-83 (YPLQPGGLLAIEAVAIGMTSA), 96-116 (VLLLLVFMVAGIYFMKQLLLF), 131-165 (VSLMFCLTSAFLSAFLDALTVIAVIIAVAVGFYAI), 204-224 (LLMHAGVGTALGGVCTMVGEP), 240-260 (FVVRMSPVTVPVLIAGILTCL), 305-325 (VLVGVWLIAGLALHLASVGLV), 359-379 (LAVFFAVVAVIIDQHLFAPVI), 391-411 (LVIFYIANGLLSMVSDNVFVG), 449-469 (ATPNGQAAFLFLLTSALAPLI), and 476-496 (MVWMALPYTIVLSVVGVLAIE).

Belongs to the NhaB Na(+)/H(+) (TC 2.A.34) antiporter family.

The protein localises to the cell inner membrane. It carries out the reaction 2 Na(+)(in) + 3 H(+)(out) = 2 Na(+)(out) + 3 H(+)(in). Functionally, na(+)/H(+) antiporter that extrudes sodium in exchange for external protons. In Shewanella sp. (strain W3-18-1), this protein is Na(+)/H(+) antiporter NhaB.